The sequence spans 106 residues: DNA-directed RNA polymerase subunit omega (106 aa).

Residues 76 to 106 (REPAREAAEPAGEAPEEQQRAAGEREDQGAA) form a disordered region. Over residues 92–106 (EQQRAAGEREDQGAA) the composition is skewed to basic and acidic residues.

This sequence belongs to the RNA polymerase subunit omega family. In terms of assembly, the RNAP catalytic core consists of 2 alpha, 1 beta, 1 beta' and 1 omega subunit. When a sigma factor is associated with the core the holoenzyme is formed, which can initiate transcription.

It carries out the reaction RNA(n) + a ribonucleoside 5'-triphosphate = RNA(n+1) + diphosphate. Functionally, promotes RNA polymerase assembly. Latches the N- and C-terminal regions of the beta' subunit thereby facilitating its interaction with the beta and alpha subunits. The chain is DNA-directed RNA polymerase subunit omega from Rubrobacter xylanophilus (strain DSM 9941 / JCM 11954 / NBRC 16129 / PRD-1).